The sequence spans 125 residues: 14 kDa phosphohistidine phosphatase (125 aa).

Residue Ala-2 is modified to N-acetylalanine. Lys-21 serves as a coordination point for substrate. Residue His-53 is the Proton acceptor of the active site. 94–96 (SMA) contributes to the substrate binding site.

Belongs to the janus family. Monomer. In terms of tissue distribution, expressed abundantly in heart and skeletal muscle.

The protein resides in the cytoplasm. It carries out the reaction N(pros)-phospho-L-histidyl-[protein] + H2O = L-histidyl-[protein] + phosphate. The catalysed reaction is N(tele)-phospho-L-histidyl-[protein] + H2O = L-histidyl-[protein] + phosphate. In terms of biological role, exhibits phosphohistidine phosphatase activity. This Homo sapiens (Human) protein is 14 kDa phosphohistidine phosphatase (PHPT1).